Here is a 304-residue protein sequence, read N- to C-terminus: MIQSTEFFWWKFELVFPPDVEESFLWFLNMAGIKSYAIERSPDNLQDQTLMVWLPSHEWLKKDREEFENSLLALNKAFREDVLNTKWEKIIDEDWSSSWKKFWKADPVGSKILILPSWLELPDIYSNRIVIKLDPGSAFGTGSHPTTRLCLEDLERNPPLGKKVVDIGCGSGVLGIAAIKLGAKEVRAIDIDSLAVRATSENIVLNNLSQKQLSVSLGSIENLANQLNPLSADLLICNTLSPVIKELAPYFFKLTHSYSRLCLSGLLVAQVEDITNFLSILGWELIDSYSSDNWALIRLCRNHP.

Positions 147, 168, 190, and 238 each coordinate S-adenosyl-L-methionine.

The protein belongs to the methyltransferase superfamily. PrmA family.

It is found in the cytoplasm. The enzyme catalyses L-lysyl-[protein] + 3 S-adenosyl-L-methionine = N(6),N(6),N(6)-trimethyl-L-lysyl-[protein] + 3 S-adenosyl-L-homocysteine + 3 H(+). In terms of biological role, methylates ribosomal protein L11. The chain is Ribosomal protein L11 methyltransferase from Prochlorococcus marinus (strain SARG / CCMP1375 / SS120).